The chain runs to 187 residues: Ribosome maturation factor RimP (187 aa).

This sequence belongs to the RimP family.

It localises to the cytoplasm. Its function is as follows. Required for maturation of 30S ribosomal subunits. The polypeptide is Ribosome maturation factor RimP (Phenylobacterium zucineum (strain HLK1)).